Reading from the N-terminus, the 492-residue chain is Aspartyl/glutamyl-tRNA(Asn/Gln) amidotransferase subunit B (492 aa).

Belongs to the GatB/GatE family. GatB subfamily. As to quaternary structure, heterotrimer of A, B and C subunits.

The enzyme catalyses L-glutamyl-tRNA(Gln) + L-glutamine + ATP + H2O = L-glutaminyl-tRNA(Gln) + L-glutamate + ADP + phosphate + H(+). It carries out the reaction L-aspartyl-tRNA(Asn) + L-glutamine + ATP + H2O = L-asparaginyl-tRNA(Asn) + L-glutamate + ADP + phosphate + 2 H(+). Functionally, allows the formation of correctly charged Asn-tRNA(Asn) or Gln-tRNA(Gln) through the transamidation of misacylated Asp-tRNA(Asn) or Glu-tRNA(Gln) in organisms which lack either or both of asparaginyl-tRNA or glutaminyl-tRNA synthetases. The reaction takes place in the presence of glutamine and ATP through an activated phospho-Asp-tRNA(Asn) or phospho-Glu-tRNA(Gln). This is Aspartyl/glutamyl-tRNA(Asn/Gln) amidotransferase subunit B from Bradyrhizobium diazoefficiens (strain JCM 10833 / BCRC 13528 / IAM 13628 / NBRC 14792 / USDA 110).